We begin with the raw amino-acid sequence, 787 residues long: DNA ligase (787 aa).

Residues 32–36 (DVEYD), 81–82 (SL), and Glu-121 each bind NAD(+). The active-site N6-AMP-lysine intermediate is Lys-123. Positions 144, 181, 297, and 321 each coordinate NAD(+). 4 residues coordinate Zn(2+): Cys-415, Cys-418, Cys-445, and Cys-451. The 85-residue stretch at 703-787 (VEGLPLAGQT…RLIELGVAVD (85 aa)) folds into the BRCT domain.

Belongs to the NAD-dependent DNA ligase family. LigA subfamily. Mg(2+) is required as a cofactor. Mn(2+) serves as cofactor.

It carries out the reaction NAD(+) + (deoxyribonucleotide)n-3'-hydroxyl + 5'-phospho-(deoxyribonucleotide)m = (deoxyribonucleotide)n+m + AMP + beta-nicotinamide D-nucleotide.. Its function is as follows. DNA ligase that catalyzes the formation of phosphodiester linkages between 5'-phosphoryl and 3'-hydroxyl groups in double-stranded DNA using NAD as a coenzyme and as the energy source for the reaction. It is essential for DNA replication and repair of damaged DNA. The chain is DNA ligase from Pseudomonas syringae pv. syringae (strain B728a).